We begin with the raw amino-acid sequence, 80 residues long: Myrmicitoxin(1)-Pr1a (80 aa).

An N-terminal signal peptide occupies residues 1–23; that stretch reads MEIPKLLYIAVIAIGLSGSLTWA. Positions 24 to 57 are excised as a propeptide; the sequence is TPLANPLAEAEAEAKATAEATAEALAEALAEPEP. Phenylalanine amide is present on phenylalanine 79.

This sequence belongs to the formicidae venom clade 1 family. Expressed by the venom gland.

The protein localises to the secreted. Vertebrate-selective toxin that causes pain by targeting voltage-gated sodium channels. The protein is Myrmicitoxin(1)-Pr1a of Pogonomyrmex rugosus (Desert harvester ant).